Reading from the N-terminus, the 484-residue chain is Palmitoyltransferase ZDHHC1 (484 aa).

Polar residues-rich tracts occupy residues 1 to 11 (MNICNKPSNKT) and 19 to 34 (TAPS…LQGQ). The segment at 1-38 (MNICNKPSNKTAPEKSVWTAPSQDSGPSPELQGQRSRR) is disordered. At 1–49 (MNICNKPSNKTAPEKSVWTAPSQDSGPSPELQGQRSRRNGWSWPPHPLQ) the chain is on the cytoplasmic side. Residues 1-268 (MNICNKPSNK…GHLLCFHIYL (268 aa)) form a mediates interaction with STING1 region. Residues 50-70 (IVAWLLYLFFAVIGFGVLVPL) traverse the membrane as a helical segment. At 71–74 (LPHH) the chain is on the lumenal side. Residues 75–95 (WVPAGYACMGAIFAGHLVVHL) traverse the membrane as a helical segment. Topologically, residues 96–182 (TAVSIDPADA…YRLFLHSVAS (87 aa)) are cytoplasmic. In terms of domain architecture, DHHC spans 131-181 (LHCNLCDVDVSARSKHCSACNKCVCGFDHHCKWLNNCVGERNYRLFLHSVA). Cysteine 161 (S-palmitoyl cysteine intermediate) is an active-site residue. Residues 183–203 (ALLGVLLLVLVATYVFVEFFV) form a helical membrane-spanning segment. Residues 204–238 (NPMRLRTNQHFEVLKNHTDVWFVFLPAAPVETQAP) are Lumenal-facing. Residues 239–259 (AILALAALLILLGLLSTALLG) form a helical membrane-spanning segment. The Cytoplasmic portion of the chain corresponds to 260–484 (HLLCFHIYLM…GTPGGGDGLP (225 aa)). 2 disordered regions span residues 341–415 (TQGQ…VHAG) and 444–484 (LGAP…DGLP). Over residues 364–374 (PQKKRKRRVYR) the composition is skewed to basic residues. Residues 380 to 392 (VLDRELPLPRLRE) show a composition bias toward basic and acidic residues. A compositionally biased stretch (low complexity) spans 395–415 (TPSRRSSSSSDSTSASPVHAG). The segment covering 475–484 (GTPGGGDGLP) has biased composition (gly residues).

Belongs to the DHHC palmitoyltransferase family. In terms of assembly, interacts with STING1; ZDHHC1 constitutively interacts with STING1 and in presence of DNA viruses activates it by promoting its cGAMP-induced oligomerization and the recruitment of downstream signaling components. Expressed at high levels in fetal lung and heart. Expressed at lower levels in fetal liver and brain. Also detected in adult islet cells of pancreas, Leydig cells of testis, retina and molecular layer of cerebellum.

Its subcellular location is the endosome membrane. It localises to the endoplasmic reticulum membrane. The protein localises to the golgi apparatus. It catalyses the reaction L-cysteinyl-[protein] + hexadecanoyl-CoA = S-hexadecanoyl-L-cysteinyl-[protein] + CoA. In terms of biological role, palmitoyltransferase that catalyzes the addition of palmitate onto various protein substrates, such as NCDN and NLRP3. Has a palmitoyltransferase activity toward NCDN and regulates NCDN association with endosome membranes through this palmitoylation. Acts as an activator of the NLRP3 inflammasome by mediating palmitoylation of 'Cys-130' and 'Cys-958' of NLRP3, thereby promoting NLRP3 phosphorylation and activation by NEK7. Its function is as follows. Also has a palmitoyltransferase activity-independent function in DNA virus-triggered and CGAS-mediated innate immune response. Functions as an activator of STING1 by promoting its cGAMP-induced oligomerization and the recruitment of downstream signaling components. In Mus musculus (Mouse), this protein is Palmitoyltransferase ZDHHC1.